A 263-amino-acid chain; its full sequence is Proteasome subunit alpha type-1 (263 aa).

An N-acetylmethionine modification is found at Met1. Ser110 carries the post-translational modification Phosphoserine; alternate. The O-linked (GlcNAc) serine; alternate glycan is linked to Ser110. A Glycyl lysine isopeptide (Lys-Gly) (interchain with G-Cter in ubiquitin) cross-link involves residue Lys115. Ser177 bears the Phosphoserine mark. Residue Lys208 forms a Glycyl lysine isopeptide (Lys-Gly) (interchain with G-Cter in ubiquitin) linkage. A disordered region spans residues 232-263 (FLEGLEERPQRKAQPAQPADEPAEKADEPMEH). The segment covering 253–263 (PAEKADEPMEH) has biased composition (basic and acidic residues).

The protein belongs to the peptidase T1A family. The 26S proteasome consists of a 20S proteasome core and two 19S regulatory subunits. The 20S proteasome core is a barrel-shaped complex made of 28 subunits that are arranged in four stacked rings. The two outer rings are each formed by seven alpha subunits, and the two inner rings are formed by seven beta subunits. The proteolytic activity is exerted by three beta-subunits PSMB5, PSMB6 and PSMB7. Interacts with NOTCH3. Interacts with ZFAND1.

Its subcellular location is the cytoplasm. It localises to the nucleus. Component of the 20S core proteasome complex involved in the proteolytic degradation of most intracellular proteins. This complex plays numerous essential roles within the cell by associating with different regulatory particles. Associated with two 19S regulatory particles, forms the 26S proteasome and thus participates in the ATP-dependent degradation of ubiquitinated proteins. The 26S proteasome plays a key role in the maintenance of protein homeostasis by removing misfolded or damaged proteins that could impair cellular functions, and by removing proteins whose functions are no longer required. Associated with the PA200 or PA28, the 20S proteasome mediates ubiquitin-independent protein degradation. This type of proteolysis is required in several pathways including spermatogenesis (20S-PA200 complex) or generation of a subset of MHC class I-presented antigenic peptides (20S-PA28 complex). This chain is Proteasome subunit alpha type-1 (PSMA1), found in Macaca fascicularis (Crab-eating macaque).